The following is a 215-amino-acid chain: Sodium channel regulatory subunit beta-2 (215 aa).

An N-terminal signal peptide occupies residues 1–29 (MHRDAWLPRPAFSLTGLSLFFSLVPPGRS). At 30–157 (MEVTVPATLN…MEEPPERDST (128 aa)) the chain is on the extracellular side. Residues 32–154 (VTVPATLNVL…QVLMEEPPER (123 aa)) enclose the Ig-like C2-type domain. 3 N-linked (GlcNAc...) asparagine glycosylation sites follow: Asn42, Asn66, and Asn74. 2 cysteine pairs are disulfide-bonded: Cys50-Cys127 and Cys72-Cys75. A helical transmembrane segment spans residues 158-179 (VAVIVGASVGGFLAVVILVLMV). Residues 180–215 (VKCVRRKKEQKLSTDDLKTEEEGKTDGEGNPDDGAK) lie on the Cytoplasmic side of the membrane. Positions 187–215 (KEQKLSTDDLKTEEEGKTDGEGNPDDGAK) are disordered. Basic and acidic residues predominate over residues 189-215 (QKLSTDDLKTEEEGKTDGEGNPDDGAK). Ser192 carries the phosphoserine modification. Thr204 carries the post-translational modification Phosphothreonine.

This sequence belongs to the sodium channel auxiliary subunit SCN2B (TC 8.A.17) family. In terms of assembly, a voltage-gated sodium (Nav) channel consists of an ion-conducting pore-forming alpha subunit functional on its own that is regulated by one or more beta subunits. The beta subunit SCN2B is disulfide-linked to the pore-forming alpha subunit. Interacts with SCN1A; regulatory subunit of SCN1A/Nav1.1. Interacts with SCN2A; regulatory subunit of SCN2A/Nav1.2. Interacts with SCN3A; regulatory subunit of SCN3A/Nav1.3. Interacts with SCN5A; regulatory subunit of SCN5A/Nav1.5. Interacts with SCN8A; regulatory subunit of SCN8A/Nav1.6. Interacts with SCN9A; regulatory subunit of SCN9A/Nav1.7. Interacts with SCN10A; regulatory subunit of SCN10A/Nav1.8. Interacts with TNR; may play a crucial role in clustering and regulation of activity of SCN2B-containing Nav channels at nodes of Ranvier.

It is found in the cell membrane. The protein localises to the cell projection. Its subcellular location is the axon. Its function is as follows. Regulatory subunit of multiple voltage-gated sodium (Nav) channels directly mediating the depolarization of excitable membranes. Navs, also called VGSCs (voltage-gated sodium channels) or VDSCs (voltage-dependent sodium channels), operate by switching between closed and open conformations depending on the voltage difference across the membrane. In the open conformation they allow Na(+) ions to selectively pass through the pore, along their electrochemical gradient. The influx of Na+ ions provokes membrane depolarization, initiating the propagation of electrical signals throughout cells and tissues. The accessory beta subunits participate in localization and functional modulation of the Nav channels. Modulates the activity of SCN1A/Nav1.1, SCN2A/Nav1.2, SCN2A/Nav1.3, SCN5A/Nav1.5, SCN8A/Nav1.6, SCN9A/Nav1.7 and SCN10A/Nav1.8. This Homo sapiens (Human) protein is Sodium channel regulatory subunit beta-2.